Consider the following 209-residue polypeptide: Ribosomal RNA large subunit methyltransferase E (209 aa).

S-adenosyl-L-methionine is bound by residues glycine 63, tryptophan 65, aspartate 83, aspartate 99, and aspartate 124. Lysine 164 serves as the catalytic Proton acceptor.

This sequence belongs to the class I-like SAM-binding methyltransferase superfamily. RNA methyltransferase RlmE family.

The protein localises to the cytoplasm. It catalyses the reaction uridine(2552) in 23S rRNA + S-adenosyl-L-methionine = 2'-O-methyluridine(2552) in 23S rRNA + S-adenosyl-L-homocysteine + H(+). Functionally, specifically methylates the uridine in position 2552 of 23S rRNA at the 2'-O position of the ribose in the fully assembled 50S ribosomal subunit. The chain is Ribosomal RNA large subunit methyltransferase E from Baumannia cicadellinicola subsp. Homalodisca coagulata.